We begin with the raw amino-acid sequence, 311 residues long: Probable manganese-dependent inorganic pyrophosphatase (311 aa).

H9, D13, D15, D75, H97, and D149 together coordinate Mn(2+).

The protein belongs to the PPase class C family. Mn(2+) serves as cofactor.

Its subcellular location is the cytoplasm. The catalysed reaction is diphosphate + H2O = 2 phosphate + H(+). This is Probable manganese-dependent inorganic pyrophosphatase from Lactobacillus gasseri (strain ATCC 33323 / DSM 20243 / BCRC 14619 / CIP 102991 / JCM 1131 / KCTC 3163 / NCIMB 11718 / NCTC 13722 / AM63).